The sequence spans 40 residues: Photosystem II reaction center protein J (40 aa).

M2 is subject to N-acetylmethionine. Topologically, residues 2 to 11 (MSEGGRIPLW) are cytoplasmic. Residues 12 to 26 (IVATVAGMGVIVIVG) form a helical membrane-spanning segment. Residues 27 to 40 (LFFYGAYAGLGSSL) lie on the Lumenal side of the membrane.

This sequence belongs to the PsbJ family. In terms of assembly, PSII is composed of 1 copy each of membrane proteins PsbA, PsbB, PsbC, PsbD, PsbE, PsbF, PsbH, PsbI, PsbJ, PsbK, PsbL, PsbM, PsbT, PsbX, PsbY, PsbZ, Psb30/Ycf12, peripheral proteins PsbO, CyanoQ (PsbQ), PsbU, PsbV and a large number of cofactors. It forms dimeric complexes. It depends on PSII binds multiple chlorophylls, carotenoids and specific lipids. as a cofactor.

It localises to the cellular thylakoid membrane. Its function is as follows. One of the components of the core complex of photosystem II (PSII). PSII is a light-driven water:plastoquinone oxidoreductase that uses light energy to abstract electrons from H(2)O, generating O(2) and a proton gradient subsequently used for ATP formation. It consists of a core antenna complex that captures photons, and an electron transfer chain that converts photonic excitation into a charge separation. May play a regulatory role in PSII biogenesis. This chain is Photosystem II reaction center protein J, found in Thermosynechococcus vestitus (strain NIES-2133 / IAM M-273 / BP-1).